The sequence spans 465 residues: 3-isopropylmalate dehydratase large subunit (465 aa).

[4Fe-4S] cluster contacts are provided by cysteine 346, cysteine 406, and cysteine 409.

It belongs to the aconitase/IPM isomerase family. LeuC type 1 subfamily. In terms of assembly, heterodimer of LeuC and LeuD. [4Fe-4S] cluster serves as cofactor.

It carries out the reaction (2R,3S)-3-isopropylmalate = (2S)-2-isopropylmalate. The protein operates within amino-acid biosynthesis; L-leucine biosynthesis; L-leucine from 3-methyl-2-oxobutanoate: step 2/4. In terms of biological role, catalyzes the isomerization between 2-isopropylmalate and 3-isopropylmalate, via the formation of 2-isopropylmaleate. In Psychromonas ingrahamii (strain DSM 17664 / CCUG 51855 / 37), this protein is 3-isopropylmalate dehydratase large subunit.